We begin with the raw amino-acid sequence, 183 residues long: Regulatory protein RecX (183 aa).

Residues 1–12 (MTSFPHPSTSES) show a composition bias toward polar residues. Positions 1–26 (MTSFPHPSTSESGPDPDSEPNREEQA) are disordered.

It belongs to the RecX family.

It localises to the cytoplasm. Functionally, modulates RecA activity. This chain is Regulatory protein RecX, found in Mycobacterium sp. (strain JLS).